Consider the following 219-residue polypeptide: Glutamine transport system permease protein GlnP (219 aa).

Residues 1-22 (MQFDWSAIWPAIPLLIEGAKMT) are Periplasmic-facing. Residues 19–209 (AKMTLWISVL…IITLVLSFIL (191 aa)) form the ABC transmembrane type-1 domain. The helical transmembrane segment at 23-43 (LWISVLGLAGGLVIGLLAGFA) threads the bilayer. Over 44–53 (RTFGGWIANH) the chain is Cytoplasmic. Residues 54-74 (VALVFIEVIRGTPIVVQVMFI) form a helical membrane-spanning segment. Residues 75–88 (YFALPMAFNDLRID) lie on the Periplasmic side of the membrane. A helical membrane pass occupies residues 89-109 (PFTAAVVTIMINSGAYIAEIT). Residues 110–150 (RGAVLSIHKGFREAGLALGLSRWETIRYVILPLALRRMLPP) are Cytoplasmic-facing. Residues 151 to 171 (LGNQWIISIKDTSLFIVIGVA) traverse the membrane as a helical segment. Residues 172–187 (ELTRQGQEIIAGNFRA) lie on the Periplasmic side of the membrane. The helical transmembrane segment at 188-208 (LEIWSAVAVFYLIITLVLSFI) threads the bilayer. The Cytoplasmic segment spans residues 209–219 (LRRLERRMKIL).

This sequence belongs to the binding-protein-dependent transport system permease family. HisMQ subfamily.

The protein resides in the cell inner membrane. Its function is as follows. Part of the binding-protein-dependent transport system for glutamine; probably responsible for the translocation of the substrate across the membrane. This Escherichia coli O6:H1 (strain CFT073 / ATCC 700928 / UPEC) protein is Glutamine transport system permease protein GlnP (glnP).